Consider the following 182-residue polypeptide: CASP-like protein 2B1 (182 aa).

Over 1 to 12 the chain is Cytoplasmic; it reads MKLIDRRMRLTE. The helical transmembrane segment at 13 to 31 threads the bilayer; it reads LLLRCSISVFALLALILVV. At 32-52 the chain is on the extracellular side; sequence TDTEVKLIFTIKKTAKYTDMK. A helical membrane pass occupies residues 53–73; the sequence is AVVFLVVANGIAAVYSLLQSV. The Cytoplasmic portion of the chain corresponds to 74–89; that stretch reads RCVVGTMKGRVLFSKP. The helical transmembrane segment at 90-110 threads the bilayer; that stretch reads LAWAFFSGDQAMAYLNVAAIA. Over 111–141 the chain is Extracellular; the sequence is ATAESGVIAREGEEDLQWMRVCNMYGKFCNQ. A helical membrane pass occupies residues 142-162; the sequence is MAIGVSSALLASIAMVFVSCI. Topologically, residues 163-182 are cytoplasmic; sequence SAFSLFRLYGATRDRRTTPW.

Belongs to the Casparian strip membrane proteins (CASP) family. In terms of assembly, homodimer and heterodimers.

Its subcellular location is the cell membrane. The protein is CASP-like protein 2B1 of Arabidopsis lyrata subsp. lyrata (Lyre-leaved rock-cress).